Here is a 229-residue protein sequence, read N- to C-terminus: Ribulose-phosphate 3-epimerase (229 aa).

Serine 12 is a binding site for substrate. Residues histidine 37, aspartate 39, and histidine 70 each coordinate a divalent metal cation. Aspartate 39 (proton acceptor) is an active-site residue. Residues histidine 70, 146–149 (GFTG), 181–183 (DGG), and 203–204 (AS) each bind substrate. Aspartate 181 serves as a coordination point for a divalent metal cation. Aspartate 181 serves as the catalytic Proton donor.

It belongs to the ribulose-phosphate 3-epimerase family. A divalent metal cation is required as a cofactor.

The catalysed reaction is D-ribulose 5-phosphate = D-xylulose 5-phosphate. It participates in carbohydrate degradation. In terms of biological role, catalyzes the reversible epimerization of D-ribulose 5-phosphate to D-xylulose 5-phosphate. The sequence is that of Ribulose-phosphate 3-epimerase from Chlamydia pneumoniae (Chlamydophila pneumoniae).